The sequence spans 346 residues: Phospholipase A1 (346 aa).

Residues 1–26 form the signal peptide; the sequence is MRKFAAIFVVFFVQCTHLYSLAQARA. Positions 27–37 are excised as a propeptide; sequence EPDPGVVEYLK. N-linked (GlcNAc...) asparagine glycosylation is found at Asn44 and Asn72. The Nucleophile role is filled by Ser167. An N-linked (GlcNAc...) asparagine glycan is attached at Asn185. Catalysis depends on charge relay system residues Asp195 and His258.

Belongs to the AB hydrolase superfamily. Lipase family. Contains six disulfide bonds. Post-translationally, N-glycosylated; contains mannose. In terms of tissue distribution, expressed by the venom gland.

It localises to the secreted. It catalyses the reaction a 1,2-diacyl-sn-glycero-3-phosphocholine + H2O = a 2-acyl-sn-glycero-3-phosphocholine + a fatty acid + H(+). Catalyzes the hydrolysis of phosphatidylcholine with phospholipase A1 activity. Induces hemolytic activity. Acts as an allergen. The chain is Phospholipase A1 from Solenopsis invicta (Red imported fire ant).